The following is a 487-amino-acid chain: ATP synthase subunit beta (487 aa).

164–171 (GGAGVGKT) contacts ATP.

The protein belongs to the ATPase alpha/beta chains family. F-type ATPases have 2 components, CF(1) - the catalytic core - and CF(0) - the membrane proton channel. CF(1) has five subunits: alpha(3), beta(3), gamma(1), delta(1), epsilon(1). CF(0) has four main subunits: a(1), b(1), b'(1) and c(9-12).

It localises to the cellular thylakoid membrane. The catalysed reaction is ATP + H2O + 4 H(+)(in) = ADP + phosphate + 5 H(+)(out). Its function is as follows. Produces ATP from ADP in the presence of a proton gradient across the membrane. The catalytic sites are hosted primarily by the beta subunits. The polypeptide is ATP synthase subunit beta (Synechococcus sp. (strain CC9605)).